A 296-amino-acid chain; its full sequence is Arginine/serine-rich protein 1 (296 aa).

Residues 1–131 (MSNYVNDMWP…RSRSRSRERS (131 aa)) are disordered. Ser-12 is subject to Phosphoserine. Residues 20-31 (SASRSGGSSRLS) are compositionally biased toward low complexity. Residues 32-125 (SRSRSRSFSR…RSRSRSRSRS (94 aa)) are compositionally biased toward basic residues. Ser-111 and Ser-113 each carry phosphoserine. Arg-141 carries the post-translational modification Omega-N-methylarginine. Basic and acidic residues predominate over residues 156–165 (ERSRWRDRSR). Disordered stretches follow at residues 156 to 175 (ERSR…TPFR) and 217 to 296 (SHGI…WIPV). Over residues 245-261 (EKPSQQRSIAFSSNNSV) the composition is skewed to polar residues. Residues 272–287 (ATEETSSRSPKIDKKK) are compositionally biased toward basic and acidic residues. Ser-280 is modified (phosphoserine).

Belongs to the RSRP family. Phosphorylated. Phosphorylation at Ser-111 and Ser-113 mediates the interaction with spliceosome proteins.

It localises to the nucleus. Functionally, probably acts as a spliceosomal factor that contributes to spliceosome assembly and regulates the isoform switching of proteins such as PARP6. The chain is Arginine/serine-rich protein 1 (RSRP1) from Macaca fascicularis (Crab-eating macaque).